The following is a 212-amino-acid chain: Glutathione S-transferase hmp2 (212 aa).

Residues 1-80 (MVIKLYGSAM…YLARKYDSGT (80 aa)) enclose the GST N-terminal domain. Glutathione-binding positions include 51–52 (KV) and 64–65 (ES). Residues 88-212 (DHEAYGRFEQ…TWIKATAEAR (125 aa)) enclose the GST C-terminal domain.

Belongs to the GST superfamily.

The enzyme catalyses RX + glutathione = an S-substituted glutathione + a halide anion + H(+). The protein operates within secondary metabolite biosynthesis. In terms of biological role, glutathione S-transferase; part of the gene cluster that mediates the biosynthesis of hypothemycin, a resorcylic acid lactone (RAL) that irreversibly inhibits a subset of protein kinases with a conserved cysteine in the ATP binding site such as human ERK2. The first step is performed by both PKSs hmp3 and hmp8 and leads to the production of 7',8'-dehydrozearalenol (DHZ). The highly reducing PKS hpm8 synthesizes the reduced hexaketide (7S,11S,2E,8E)-7,11-dihydroxy-dodeca-2,8-dienoate, which is transferred downstream to the non-reducing PKS hpm3. Hpm3 then extends the reduced hexaketide to a nonaketide, after which regioselective cyclization and macrolactonization affords DHZ. The next step is the conversion of DHZ into aigialomycin C and is performed by the O-methyltransferase hmp5, the FAD-binding monooxygenase hmp7, and the cytochrome P450 monooxygenase hmp1. The wide substrate tolerance of the hmp5 and hmp7 implies that the reactions from DHZ to aigialomycin C can occur in any order. The steps from aigialomycin C to hypothemycin are less well established. The FAD-linked oxidoreductase hmp9 presumably catalyzes oxidation of the C-6' hydroxyl to a ketone. The timing of this oxidation is important, since the resulting enone functional group is a Michael acceptor that can react spontaneously with glutathione, an abundant metabolite in fungal cells. The glutathione S-transferase hmp2 catalyzes cis-trans isomerization of the 7',8' double bond with equilibrium favoring the trans isomer. The hpm6-encoded transporter might preferentially pump hypothemycin out of the cell relative to the trans isomer aigialomycin A. The cis-to-trans isomerization may be coupled with C-4' hydroxylation, since all known hypothemycin analogs containing the enone functional group also have hydroxyl groups at both C-4' and C-5'. This Hypomyces subiculosus (Nectria subiculosa) protein is Glutathione S-transferase hmp2.